Here is a 144-residue protein sequence, read N- to C-terminus: Transcriptional regulator MraZ (144 aa).

2 SpoVT-AbrB domains span residues 4–47 (EYKN…TADK) and 77–120 (AQEI…DLKQ).

The protein belongs to the MraZ family. In terms of assembly, forms oligomers.

The protein resides in the cytoplasm. It is found in the nucleoid. The sequence is that of Transcriptional regulator MraZ from Treponema denticola (strain ATCC 35405 / DSM 14222 / CIP 103919 / JCM 8153 / KCTC 15104).